The primary structure comprises 256 residues: Ribosomal RNA small subunit methyltransferase A (256 aa).

S-adenosyl-L-methionine contacts are provided by His-12, Leu-14, Gly-39, Glu-60, Asp-81, and Asn-103.

It belongs to the class I-like SAM-binding methyltransferase superfamily. rRNA adenine N(6)-methyltransferase family. RsmA subfamily.

The protein resides in the cytoplasm. It catalyses the reaction adenosine(1518)/adenosine(1519) in 16S rRNA + 4 S-adenosyl-L-methionine = N(6)-dimethyladenosine(1518)/N(6)-dimethyladenosine(1519) in 16S rRNA + 4 S-adenosyl-L-homocysteine + 4 H(+). Its function is as follows. Specifically dimethylates two adjacent adenosines (A1518 and A1519) in the loop of a conserved hairpin near the 3'-end of 16S rRNA in the 30S particle. May play a critical role in biogenesis of 30S subunits. In Methylibium petroleiphilum (strain ATCC BAA-1232 / LMG 22953 / PM1), this protein is Ribosomal RNA small subunit methyltransferase A.